A 354-amino-acid polypeptide reads, in one-letter code: Protein-glutamate methylesterase/protein-glutamine glutaminase (354 aa).

The Response regulatory domain maps to 7-124 (KVLCVDDSAL…REGMLEYTEM (118 aa)). The residue at position 58 (Asp58) is a 4-aspartylphosphate. Residues 156–348 (LLSSEKVIII…AALMKRAEAS (193 aa)) enclose the CheB-type methylesterase domain. Residues Ser168, His194, and Asp290 contribute to the active site.

It belongs to the CheB family. Post-translationally, phosphorylated by CheA. Phosphorylation of the N-terminal regulatory domain activates the methylesterase activity.

It is found in the cytoplasm. It carries out the reaction [protein]-L-glutamate 5-O-methyl ester + H2O = L-glutamyl-[protein] + methanol + H(+). The catalysed reaction is L-glutaminyl-[protein] + H2O = L-glutamyl-[protein] + NH4(+). Involved in chemotaxis. Part of a chemotaxis signal transduction system that modulates chemotaxis in response to various stimuli. Catalyzes the demethylation of specific methylglutamate residues introduced into the chemoreceptors (methyl-accepting chemotaxis proteins or MCP) by CheR. Also mediates the irreversible deamidation of specific glutamine residues to glutamic acid. The chain is Protein-glutamate methylesterase/protein-glutamine glutaminase from Chromohalobacter salexigens (strain ATCC BAA-138 / DSM 3043 / CIP 106854 / NCIMB 13768 / 1H11).